A 453-amino-acid chain; its full sequence is Putative sodium-coupled neutral amino acid transporter 11 (453 aa).

Positions 1 to 34 are disordered; sequence MSYQQPQLRGPLQRETDPSDRESLVSGHEHGGKS. Positions 12-32 are enriched in basic and acidic residues; it reads LQRETDPSDRESLVSGHEHGG. Helical transmembrane passes span 39-59, 66-86, 106-126, 152-172, 179-199, 222-242, 262-282, 299-319, 337-357, 359-379, and 399-419; these read AVFNVVNSVIGSGIIGLPYSM, LGILLLFWVSYITDFSLVLLI, GFPGYLLLSTLQFMYPFIAMI, FISRHFIIVVSTVTCTLPLSL, LGKISFISTILTAVILGVVVT, AIQAIGVMSFAFICHHNCFLV, ILVSVFICVLFATCGYFTFTG, VTFGRFCYGITVILTYPIECF, VFHVTLTAAIVTAATLISLLI, CLGIVLELNGVLCAAPLIFII, and MACVMFPVGAVVMVAGFVMAI.

This sequence belongs to the amino acid/polyamine transporter 2 family. As to expression, widely expressed.

Its subcellular location is the membrane. In terms of biological role, putative sodium-dependent amino acid/proton antiporter. This is Putative sodium-coupled neutral amino acid transporter 11 (Slc38a11) from Rattus norvegicus (Rat).